Consider the following 729-residue polypeptide: DNA gyrase subunit B, chloroplastic/mitochondrial (729 aa).

The region spanning 510–617 (SEIFIVEGDS…RYQKALFDEG (108 aa)) is the Toprim domain. 3 residues coordinate Mg(2+): E516, D590, and D592.

It belongs to the type II topoisomerase GyrB family. Made up of two chains. The A chain is responsible for DNA breakage and rejoining; the B chain catalyzes ATP hydrolysis. The cofactor is Mg(2+). Mn(2+) serves as cofactor. Ca(2+) is required as a cofactor.

Its subcellular location is the plastid. The protein localises to the chloroplast. It is found in the mitochondrion. It catalyses the reaction ATP-dependent breakage, passage and rejoining of double-stranded DNA.. Its function is as follows. A type II topoisomerase that negatively supercoils closed circular double-stranded DNA in an ATP-dependent manner. The polypeptide is DNA gyrase subunit B, chloroplastic/mitochondrial (GYRB) (Oryza sativa subsp. japonica (Rice)).